The chain runs to 1116 residues: MESVHIHVHSEYTLLSSMCRIPALVEKAKAAQFSALALTDRHVMYGAVPFYKACKESGLKPIIGMETTVRFAEDRESDLLLYARSNKGYEHLLKLSTIIQCREEKEKYVTWEELLAYKDDLLYVIPYSGGFVRACLEDEALERGERFIQFLKDHLGGESVYLEIQGTDRSKVEPINQLAAKLAIPLVCSQHIQVLEREDLDAWKVIQAIREGVLVEELRIEQEEDVCFFTLTEMEQTFRAYPEALQNTKKLADRCHVELTLGKPRLPKFQTPNEQSAEDYLRKLCEQGAKERYGEEWTKEKAQRLGEELAVIERMGFSDYFLIVWDFMRFAREASIVTGPGRGSVAGSLVAYVLFITDVDPLHYDLLFERFLNPERISLPDIDLDFPDHRREEVIVYVKKKYGANRVAQILTFGTLAARASVRDVGKALAIPPNVIEKISKEISGRPGMTLVKAYNENERLRQLVHASDEAQKVMKLARKVEGLPRHTSTHAAGVVISEQPLTEVIALQHGQGEVPLTQGTMETVEDVGLIKMDFLGLRNLTLLEMVVKRVRETYGHSLNVKQLPLNDAKTFALLAKGETTGVFQLESGGMRKVLRELKPNTFADIVAVNALYRPGPMEFIPDYIQGKEGTKEITYLHPDLEPILSSTYGVIVYQEQIMQIAAKMAGFSLGEADLLRRAISKKKGEALRQQEEAFVTGAVRQGYEQETAKKIYELIVRFANYGFNKSHAVAYSMLAYQLAYLKAHYPSSFYAALASTIWNQPEKLERLLQEMKQQGIRVLPPSLSKSDIHFSEEEEGVRFPLLPLRYVSVRAIRELIKARREAPVRSLFDLCSRVDGRIVTSRVMESLIKAGALDELGERATLLANIEEAFQFAEQVKEFQENTGGLFQLSVEEPEYIKVEPLTDLEKLAYEKEAVGFYLSGHPLLAYTESLRQYDRLTYLEGTERRFVKLAGMIHRIRRIRTKRGEVMGFLTMSDETGEWEAVVFPAVWAMYEWGLKEGELYFVEGKMDRGRSEELQLLVDKVLPLKHMLKKEKEKLFLKITADVEKEVERLNDIRRLLQVHHGPTPVVMYYEKQRKTIQLPEKYHVSLSFTLLHELEQLVGKEHVVVSTYEDES.

The protein belongs to the DNA polymerase type-C family. DnaE subfamily. In terms of assembly, DNA polymerase III contains a core (composed of alpha, epsilon and theta chains) that associates with a tau subunit. This core dimerizes to form the PolIII' complex. PolIII' associates with the gamma complex (composed of gamma, delta, delta', psi and chi chains) and with the beta chain to form the complete DNA polymerase III complex.

Its subcellular location is the cytoplasm. It carries out the reaction DNA(n) + a 2'-deoxyribonucleoside 5'-triphosphate = DNA(n+1) + diphosphate. Its function is as follows. DNA polymerase III is a complex, multichain enzyme responsible for most of the replicative synthesis in bacteria. This DNA polymerase also exhibits 3' to 5' exonuclease activity. The alpha chain is the DNA polymerase. This chain is DNA polymerase III subunit alpha (dnaE), found in Halalkalibacterium halodurans (strain ATCC BAA-125 / DSM 18197 / FERM 7344 / JCM 9153 / C-125) (Bacillus halodurans).